The chain runs to 430 residues: UDP-N-acetylmuramoylalanine--D-glutamate ligase (430 aa).

ATP is bound at residue 109-115 (GTDGKST).

This sequence belongs to the MurCDEF family.

The protein resides in the cytoplasm. The enzyme catalyses UDP-N-acetyl-alpha-D-muramoyl-L-alanine + D-glutamate + ATP = UDP-N-acetyl-alpha-D-muramoyl-L-alanyl-D-glutamate + ADP + phosphate + H(+). It functions in the pathway cell wall biogenesis; peptidoglycan biosynthesis. In terms of biological role, cell wall formation. Catalyzes the addition of glutamate to the nucleotide precursor UDP-N-acetylmuramoyl-L-alanine (UMA). This chain is UDP-N-acetylmuramoylalanine--D-glutamate ligase, found in Thermotoga sp. (strain RQ2).